The primary structure comprises 492 residues: Beclin 1-associated autophagy-related key regulator (492 aa).

The residue at position 29 (Ser-29) is a Phosphoserine. Positions 43–58 (CPLCNTTRRRLTCAKC) are cysteine repeats. Residues 71 to 180 (DRERFIDKKE…KLGDLVEKKT (110 aa)) are a coiled coil. The disordered stretch occupies residues 410-473 (PGVAGESDES…PIASSSAGGM (64 aa)). Residues 413 to 492 (AGESDESGDE…SWFKAYTGHR (80 aa)) are BATS. A compositionally biased stretch (acidic residues) spans 415–433 (ESDESGDERVSDEETDLGT). At Ser-416 the chain carries Phosphoserine. Thr-429 carries the phosphothreonine modification. The segment covering 448–473 (SQSVEVSQSQSTQASPPIASSSAGGM) has biased composition (low complexity).

This sequence belongs to the ATG14 family. As to quaternary structure, forms homooligomers; homo-oligomerization is essential for the roles in membrane tethering and enhancement of SNARE-mediated fusion. Component of the PI3K (PI3KC3/PI3K-III/class III phosphatidylinositol 3-kinase) complex I (PI3KC3-C1) in which the core composed of the catalytic subunit PIK3C3, the regulatory subunit PIK3R4 and BECN1 is associated with ATG14. PI3KC3-C1 displays a V-shaped architecture with PIK3R4 serving as a bridge between PIK3C3 and the ATG14:BECN1 subcomplex. PI3KC3-C1 can associate with further regulatory subunits. Interacts with PIK3CB. Interacts (via coiled-coil domain) with BECN2 (via coiled-coil domain); this interaction is tighter than BECN2 self-association. Interacts with the STX17-SNAP29 binary t-SNARE complex. Interacts with NRBF2. Interacts with PIK3C3 and BECN1; this interaction is increased in the absence of TMEM39A. Interacts with STEEP1; the interaction is required for trafficking of STING1 from the endoplasmic reticulum. Interacts with ARMC3 (via ARM domains). Ubiquitinated via 'Lys-6', 'Lys-11' and 'Lys-63'-linked polyubiquitin chains on multiple lysines by MARCHF7, leading to ATG14 aggregation and loss of interaction with STX17.

It localises to the cytoplasm. The protein resides in the endoplasmic reticulum membrane. It is found in the preautophagosomal structure membrane. The protein localises to the cytoplasmic vesicle. Its subcellular location is the autophagosome membrane. In terms of biological role, required for both basal and inducible autophagy. Determines the localization of the autophagy-specific PI3-kinase complex PI3KC3-C1. Plays a role in autophagosome formation and MAP1LC3/LC3 conjugation to phosphatidylethanolamine. Promotes BECN1 translocation from the trans-Golgi network to autophagosomes. Enhances PIK3C3 activity in a BECN1-dependent manner. Essential for the autophagy-dependent phosphorylation of BECN1. Stimulates the phosphorylation of BECN1, but suppresses the phosphorylation PIK3C3 by AMPK. Binds to STX17-SNAP29 binary t-SNARE complex on autophagosomes and primes it for VAMP8 interaction to promote autophagosome-endolysosome fusion. Modulates the hepatic lipid metabolism. The protein is Beclin 1-associated autophagy-related key regulator of Homo sapiens (Human).